Reading from the N-terminus, the 447-residue chain is NADP-specific glutamate dehydrogenase (447 aa).

The substrate site is built by Lys-92, Gln-113, and Lys-116. The active-site Proton donor is Lys-128. Position 167 (Gly-167) interacts with substrate. Positions 211 and 242 each coordinate NADP(+). Ser-380 provides a ligand contact to substrate.

Belongs to the Glu/Leu/Phe/Val dehydrogenases family. Homohexamer.

It catalyses the reaction L-glutamate + NADP(+) + H2O = 2-oxoglutarate + NH4(+) + NADPH + H(+). In terms of biological role, catalyzes the reversible oxidative deamination of glutamate to alpha-ketoglutarate and ammonia. This chain is NADP-specific glutamate dehydrogenase (gdhA), found in Salmonella typhi.